Here is a 2551-residue protein sequence, read N- to C-terminus: Probable polyketide synthase 13 (2551 aa).

A Ketosynthase family 3 (KS3) domain is found at 10-434 (ENDVAIIGIG…GSNCCLILSQ (425 aa)). Active-site for beta-ketoacyl synthase activity residues include Cys-176, His-317, and His-358. Residues 621 to 654 (GIEVSFIIGHSLGEIPAAYCSGMINIDTLCYLIY) form an acyl/malonyl transferase region. Ser-631 acts as the For acyl/malonyl transferase activity in catalysis. The segment at 928–1057 (TDNLGYLNEN…GDFQLSNHSS (130 aa)) is N-terminal hotdog fold. The PKS/mFAS DH domain occupies 928-1226 (TDNLGYLNEN…CTSLTPIKES (299 aa)). The active-site Proton acceptor; for dehydratase activity is the His-961. Residues 1076-1226 (NLTKLSRDEL…CTSLTPIKES (151 aa)) are C-terminal hotdog fold. Asp-1136 acts as the Proton donor; for dehydratase activity in catalysis. One can recognise a Carrier domain in the interval 2465–2542 (DCQTIIKDSF…SSIQYTINSF (78 aa)). Ser-2502 bears the O-(pantetheine 4'-phosphoryl)serine mark.

Pantetheine 4'-phosphate is required as a cofactor.

In terms of biological role, probable polyketide synthase. This Dictyostelium discoideum (Social amoeba) protein is Probable polyketide synthase 13 (pks13).